Reading from the N-terminus, the 629-residue chain is tRNA uridine 5-carboxymethylaminomethyl modification enzyme MnmG (629 aa).

FAD contacts are provided by residues 13–18 (GGGHAG), V125, and S180. Residue 273–287 (GPRYCPSIEDKVMRF) participates in NAD(+) binding. FAD is bound at residue Q370.

This sequence belongs to the MnmG family. Homodimer. Heterotetramer of two MnmE and two MnmG subunits. FAD is required as a cofactor.

It localises to the cytoplasm. Functionally, NAD-binding protein involved in the addition of a carboxymethylaminomethyl (cmnm) group at the wobble position (U34) of certain tRNAs, forming tRNA-cmnm(5)s(2)U34. The protein is tRNA uridine 5-carboxymethylaminomethyl modification enzyme MnmG of Shigella sonnei (strain Ss046).